Reading from the N-terminus, the 355-residue chain is Uroporphyrinogen decarboxylase (355 aa).

Substrate contacts are provided by residues 38-42 (RQAGR), Asp-87, Tyr-162, Ser-217, and His-331.

This sequence belongs to the uroporphyrinogen decarboxylase family. As to quaternary structure, homodimer.

Its subcellular location is the cytoplasm. The catalysed reaction is uroporphyrinogen III + 4 H(+) = coproporphyrinogen III + 4 CO2. The protein operates within porphyrin-containing compound metabolism; protoporphyrin-IX biosynthesis; coproporphyrinogen-III from 5-aminolevulinate: step 4/4. In terms of biological role, catalyzes the decarboxylation of four acetate groups of uroporphyrinogen-III to yield coproporphyrinogen-III. The polypeptide is Uroporphyrinogen decarboxylase (Streptomyces coelicolor (strain ATCC BAA-471 / A3(2) / M145)).